Here is a 448-residue protein sequence, read N- to C-terminus: MGKYFGTDGVRGVANSELTPELAFKIGRFGGYVLTKDKERPKVLVGRDTRVSGHMLEGALVAGLLSIGAEVMRLGVISTPGVSYLTKAMDAEAGVMISASHNPVQDNGIKFFGGDGFKLSDEQENEIEQLMDQPVDQLPRPVGADLGTVNDYFEGGQKYLQFLKQTADEDFTGIHVALDCAHGATSSLATHLFADLDADVSTMGTSPNGLNINDGVGSTHPEALSVFVKEKGADIGLAFDGDGDRLIAVDEKGDIVDGDQIMYICARYLKGEGRLKDNTVVSTVMSNLGFYKALEKQGIKSIQTAVGDRYVVEAMKKDGYNVGGEQSGHLIFLDYNTTGDGMLSAIMLVNTLKATGKTLSELAAEMEKFPQLLVNVKVSDKYKVEENEKVKAVIQEVEKEMNGDGRILVRPSGTEPLVRVMAEAKTKELCDEYVTRITAVVKEEMGIE.

The active-site Phosphoserine intermediate is the S100. Mg(2+) contacts are provided by S100, D240, D242, and D244. S100 carries the phosphoserine modification.

This sequence belongs to the phosphohexose mutase family. It depends on Mg(2+) as a cofactor. Post-translationally, activated by phosphorylation.

It carries out the reaction alpha-D-glucosamine 1-phosphate = D-glucosamine 6-phosphate. Its function is as follows. Catalyzes the conversion of glucosamine-6-phosphate to glucosamine-1-phosphate. The chain is Phosphoglucosamine mutase from Bacillus pumilus (strain SAFR-032).